Here is a 433-residue protein sequence, read N- to C-terminus: 3-phosphoshikimate 1-carboxyvinyltransferase (433 aa).

Positions 23, 24, and 28 each coordinate 3-phosphoshikimate. K23 contacts phosphoenolpyruvate. Phosphoenolpyruvate contacts are provided by G95 and R123. Residues S167, Q169, D317, and K344 each contribute to the 3-phosphoshikimate site. Q169 lines the phosphoenolpyruvate pocket. The active-site Proton acceptor is D317. 2 residues coordinate phosphoenolpyruvate: R348 and R390.

The protein belongs to the EPSP synthase family. Monomer.

The protein localises to the cytoplasm. It carries out the reaction 3-phosphoshikimate + phosphoenolpyruvate = 5-O-(1-carboxyvinyl)-3-phosphoshikimate + phosphate. It participates in metabolic intermediate biosynthesis; chorismate biosynthesis; chorismate from D-erythrose 4-phosphate and phosphoenolpyruvate: step 6/7. Functionally, catalyzes the transfer of the enolpyruvyl moiety of phosphoenolpyruvate (PEP) to the 5-hydroxyl of shikimate-3-phosphate (S3P) to produce enolpyruvyl shikimate-3-phosphate and inorganic phosphate. The polypeptide is 3-phosphoshikimate 1-carboxyvinyltransferase (Staphylococcus epidermidis (strain ATCC 35984 / DSM 28319 / BCRC 17069 / CCUG 31568 / BM 3577 / RP62A)).